Consider the following 482-residue polypeptide: Potential E3 ubiquitin-protein ligase ariadne-2 (482 aa).

Residues Ala125–Lys334 form a TRIAD supradomain region. The Zn(2+) site is built by Cys129, Cys132, Cys145, His147, Cys150, Cys153, Cys172, Cys177, Cys218, Cys223, Cys239, Cys242, Cys247, Cys250, His255, Cys260, Cys287, and Cys290. The RING-type 1 zinc-finger motif lies at Cys129 to Cys177. An IBR-type zinc finger spans residues Leu198–Cys260. The RING-type 2; atypical zinc finger occupies Cys287–Cys316. Residue Cys300 is part of the active site. Residues Cys305, Cys308, Cys313, Cys316, His323, and Cys330 each coordinate Zn(2+). A coiled-coil region spans residues Phe433 to Arg459.

It belongs to the RBR family. Ariadne subfamily.

It localises to the nucleus. The enzyme catalyses [E2 ubiquitin-conjugating enzyme]-S-ubiquitinyl-L-cysteine + [acceptor protein]-L-lysine = [E2 ubiquitin-conjugating enzyme]-L-cysteine + [acceptor protein]-N(6)-ubiquitinyl-L-lysine.. In terms of biological role, might act as an E3 ubiquitin-protein ligase, or as part of E3 complex, which accepts ubiquitin from specific E2 ubiquitin-conjugating enzymes, such as UBC-2/UBE2L3, and then transfers it to substrates. The sequence is that of Potential E3 ubiquitin-protein ligase ariadne-2 from Caenorhabditis elegans.